The chain runs to 525 residues: Ubiquitin carboxyl-terminal hydrolase 22 (525 aa).

A UBP-type zinc finger spans residues 21–138 (PGCSHLGSFK…KEEQRKAWKM (118 aa)). 12 residues coordinate Zn(2+): Cys23, His25, Cys63, Cys66, Cys76, Cys79, Cys84, His89, His93, His99, Cys112, and Cys115. N6-acetyllysine is present on Lys129. Thr147 bears the Phosphothreonine mark. A USP domain is found at 176 to 520 (RGLINLGNTC…EGYLLFYHKQ (345 aa)). Catalysis depends on Cys185, which acts as the Nucleophile. Ser237 is subject to Phosphoserine. His479 (proton acceptor) is an active-site residue.

It belongs to the peptidase C19 family. UBP8 subfamily. In terms of assembly, component of some SAGA transcription coactivator-HAT complexes, at least composed of ATXN7, ATXN7L3, ENY2, GCN5L2, SUPT3H, TAF10, TRRAP and USP22. Within the SAGA complex, ATXN7L3, ENY2 and USP22 form a subcomplex required for histone deubiquitination. Interacts directly with ATXN7L3; leading to its recruitment to the SAGA complex. Interacts with ATXN7L3 and weakly with ATXN7L3B. Interacts with MED1. Post-translationally, phosphorylated in G2/M phase, but not in G1 phase by CDK1. Ubiquitinated and subsequently degraded in a CDC20-dependent manner. In terms of tissue distribution, highly expressed in brain and weakly in other organs.

Its subcellular location is the nucleus. The protein resides in the cytoplasm. The catalysed reaction is Thiol-dependent hydrolysis of ester, thioester, amide, peptide and isopeptide bonds formed by the C-terminal Gly of ubiquitin (a 76-residue protein attached to proteins as an intracellular targeting signal).. Deubiquitinase that plays a role in several cellular processes including transcriptional regulation, cell cycle progression or innate immunity. As part of the transcription regulatory histone acetylation (HAT) complex SAGA, catalyzes the deubiquitination of both histones H2A and H2B, thereby acting as a transcriptional coactivator. Recruited to specific gene promoters by activators such as MYC, where it is required for transcription. Facilitates cell-cycle progression by stabilizing CCNB1 and antagonizing its proteasome-mediated degradation in a cell cycle-specific manner. Modulates cell cycle progression and apoptosis also by antagonizing TP53 transcriptional activation through deacetylase SIRT1 stabilization. Plays multiple roles in immunity and inflammation. Participates in antiviral response by deubiquitinating the importin KPNA2, leading to IRF3 nuclear translocation and subsequent type I interferon production. Acts as a central regulator of type III IFN signaling by negatively regulating STING1 activation and ubiquitination. Inhibits NLRP3 inflammasome activation by promoting NLRP3 degradation through ATG5-dependent autophagy. Deubiquitinates CD274 to induce its stabilization and thereby participates in maintenance of immune tolerance to self. Controls necroptotic cell death by regulating RIPK3 phosphorylation and ubiquitination. During bacterial infection, promotes pro-inflammatory response by targeting TRAF6 and removing its 'Lys-48'-linked polyubiquitination. In Mus musculus (Mouse), this protein is Ubiquitin carboxyl-terminal hydrolase 22 (Usp22).